Here is a 206-residue protein sequence, read N- to C-terminus: Large ribosomal subunit protein uL4 (206 aa).

This sequence belongs to the universal ribosomal protein uL4 family. In terms of assembly, part of the 50S ribosomal subunit.

Functionally, one of the primary rRNA binding proteins, this protein initially binds near the 5'-end of the 23S rRNA. It is important during the early stages of 50S assembly. It makes multiple contacts with different domains of the 23S rRNA in the assembled 50S subunit and ribosome. Its function is as follows. Forms part of the polypeptide exit tunnel. In Afipia carboxidovorans (strain ATCC 49405 / DSM 1227 / KCTC 32145 / OM5) (Oligotropha carboxidovorans), this protein is Large ribosomal subunit protein uL4.